A 1396-amino-acid chain; its full sequence is DNA ligase 6 (1396 aa).

2 disordered regions span residues 441 to 464 (KNAC…DTTP) and 562 to 599 (MNLT…GPGQ). Short sequence motifs (nuclear localization signal) lie at residues 572–579 (GKRGKSSG) and 886–893 (LRKISVQT). An ATP-binding site is contributed by E1037. The active-site N6-AMP-lysine intermediate is the K1039. ATP contacts are provided by R1044, R1060, E1092, and F1136. E1092 provides a ligand contact to Mg(2+). E1207 lines the Mg(2+) pocket. 3 residues coordinate ATP: K1212, R1225, and K1231.

The protein belongs to the ATP-dependent DNA ligase family. It depends on Mg(2+) as a cofactor. As to expression, mostly expressed in buds and flowers, and, to a lower extent, in stems, leaves, siliques and seeds.

Its subcellular location is the nucleus. The enzyme catalyses ATP + (deoxyribonucleotide)n-3'-hydroxyl + 5'-phospho-(deoxyribonucleotide)m = (deoxyribonucleotide)n+m + AMP + diphosphate.. DNA ligase that seals nicks in double-stranded DNA during DNA replication, DNA recombination and DNA repair. Required to maintain seed viability (e.g. longevity and storability) and during seed germination, probably by repairing DNA damage accumulated during seed development, storage and/or imbibition. Facilitates seed germination in cold conditions (2 degrees Celsius) and under oxidative stress (e.g. menadione, a genotoxic agent). Involved in repair of X-ray-induced damage. Its function is as follows. Limits stable root transformation by A.tumefaciens T-DNA. The chain is DNA ligase 6 from Arabidopsis thaliana (Mouse-ear cress).